We begin with the raw amino-acid sequence, 245 residues long: MAGLELLSDQGYRVDGRRAGELRKIQARMGVFAQADGSAYIEQGNTKALAVVYGPHEIRGSRARALPDRALVNCQYSSATFSTGERKRRPHGDRKSCEMGLQLRQTFEAAILTQLHPRSQIDIYVQVLQADGGTYAACVNAATLAVLDAGIPMRDFVCACSAGFVDGTALADLSHVEEAAGGPQLALALLPASGQIALLEMDARLHEDHLEQVLEAAARASRDVHTVLDRVVRQHVQEASVLLGD.

An N-acetylalanine modification is found at A2.

This sequence belongs to the RNase PH family. In terms of assembly, component of the RNA exosome core complex (Exo-9), composed of EXOSC1, EXOSC2, EXOSC3, EXOSC4, EXOSC5, EXOSC6, EXOSC7, EXOSC8 and EXOSC9; within the complex interacts with EXOSC2, EXOSC7 and EXOSC9. The catalytically inactive RNA exosome core complex (Exo-9) associates with the catalytic subunit EXOSC10/RRP6. Exo-9 may associate with DIS3 to form the nucleolar exosome complex, or DIS3L to form the cytoplasmic exosome complex. Exo-9 is formed by a hexameric base ring consisting of the heterodimers EXOSC4-EXOSC9, EXOSC5-EXOSC8 and EXOSC6-EXOSC7, and a cap ring consisting of EXOSC1, EXOSC2 and EXOSC3. The RNA exosome complex associates with cofactors C1D/RRP47, MPHOSPH6/MPP6 and MTREX/MTR4. Interacts with DDX60. Interacts with DIS3; the interaction is direct.

It localises to the cytoplasm. The protein localises to the nucleus. The protein resides in the nucleolus. It is found in the nucleoplasm. Non-catalytic component of the RNA exosome complex which has 3'-&gt;5' exoribonuclease activity and participates in a multitude of cellular RNA processing and degradation events. In the nucleus, the RNA exosome complex is involved in proper maturation of stable RNA species such as rRNA, snRNA and snoRNA, in the elimination of RNA processing by-products and non-coding 'pervasive' transcripts, such as antisense RNA species and promoter-upstream transcripts (PROMPTs), and of mRNAs with processing defects, thereby limiting or excluding their export to the cytoplasm. The RNA exosome may be involved in Ig class switch recombination (CSR) and/or Ig variable region somatic hypermutation (SHM) by targeting AICDA deamination activity to transcribed dsDNA substrates. In the cytoplasm, the RNA exosome complex is involved in general mRNA turnover and specifically degrades inherently unstable mRNAs containing AU-rich elements (AREs) within their 3' untranslated regions, and in RNA surveillance pathways, preventing translation of aberrant mRNAs. It seems to be involved in degradation of histone mRNA. The catalytic inactive RNA exosome core complex of 9 subunits (Exo-9) is proposed to play a pivotal role in the binding and presentation of RNA for ribonucleolysis, and to serve as a scaffold for the association with catalytic subunits and accessory proteins or complexes. EXOSC4 binds to ARE-containing RNAs. In Bos taurus (Bovine), this protein is Exosome complex component RRP41 (EXOSC4).